Reading from the N-terminus, the 435-residue chain is Serine--tRNA ligase (435 aa).

242–244 contributes to the L-serine binding site; the sequence is TAE. 273–275 provides a ligand contact to ATP; the sequence is RSE. Glu-296 serves as a coordination point for L-serine. 360–363 contacts ATP; it reads EISS. Residue Ser-396 participates in L-serine binding.

It belongs to the class-II aminoacyl-tRNA synthetase family. Type-1 seryl-tRNA synthetase subfamily. In terms of assembly, homodimer. The tRNA molecule binds across the dimer.

Its subcellular location is the cytoplasm. The catalysed reaction is tRNA(Ser) + L-serine + ATP = L-seryl-tRNA(Ser) + AMP + diphosphate + H(+). The enzyme catalyses tRNA(Sec) + L-serine + ATP = L-seryl-tRNA(Sec) + AMP + diphosphate + H(+). Its pathway is aminoacyl-tRNA biosynthesis; selenocysteinyl-tRNA(Sec) biosynthesis; L-seryl-tRNA(Sec) from L-serine and tRNA(Sec): step 1/1. Its function is as follows. Catalyzes the attachment of serine to tRNA(Ser). Is also able to aminoacylate tRNA(Sec) with serine, to form the misacylated tRNA L-seryl-tRNA(Sec), which will be further converted into selenocysteinyl-tRNA(Sec). This is Serine--tRNA ligase from Vibrio cholerae serotype O1 (strain ATCC 39541 / Classical Ogawa 395 / O395).